The following is a 390-amino-acid chain: Succinate--CoA ligase [ADP-forming] subunit beta (390 aa).

The 237-residue stretch at 9-245 (KHLLKKYNIP…TTQEDEHETM (237 aa)) folds into the ATP-grasp domain. Residues Lys-46, 53–55 (GRG), Glu-99, Ser-102, and Glu-107 contribute to the ATP site. The Mg(2+) site is built by Asn-200 and Asp-214. Residues Asn-265 and 322–324 (GIV) each bind substrate.

Belongs to the succinate/malate CoA ligase beta subunit family. In terms of assembly, heterotetramer of two alpha and two beta subunits. Mg(2+) is required as a cofactor.

The catalysed reaction is succinate + ATP + CoA = succinyl-CoA + ADP + phosphate. It catalyses the reaction GTP + succinate + CoA = succinyl-CoA + GDP + phosphate. It participates in carbohydrate metabolism; tricarboxylic acid cycle; succinate from succinyl-CoA (ligase route): step 1/1. Its function is as follows. Succinyl-CoA synthetase functions in the citric acid cycle (TCA), coupling the hydrolysis of succinyl-CoA to the synthesis of either ATP or GTP and thus represents the only step of substrate-level phosphorylation in the TCA. The beta subunit provides nucleotide specificity of the enzyme and binds the substrate succinate, while the binding sites for coenzyme A and phosphate are found in the alpha subunit. The polypeptide is Succinate--CoA ligase [ADP-forming] subunit beta (Coxiella burnetii (strain Dugway 5J108-111)).